The sequence spans 196 residues: Adenylate kinase (196 aa).

9 to 17 (GIPGVGKST) serves as a coordination point for ATP.

The protein belongs to the archaeal adenylate kinase family.

The protein localises to the cytoplasm. The catalysed reaction is AMP + ATP = 2 ADP. The protein is Adenylate kinase of Pyrococcus furiosus (strain ATCC 43587 / DSM 3638 / JCM 8422 / Vc1).